The sequence spans 418 residues: Putative ion-transport protein YfeO (418 aa).

Transmembrane regions (helical) follow at residues 10 to 30, 54 to 74, 99 to 119, 120 to 140, 149 to 169, 186 to 206, 223 to 243, 258 to 278, 300 to 320, 322 to 342, 343 to 363, and 386 to 406; these read LLLS…LIVV, DSPF…GLVI, ALPG…SLGP, EHPI…RLLP, ILAS…AALI, LFAP…FFHP, ILSG…AVWC, VLML…AGPV, DYFL…ASGF, GGRI…LHEH, VPAV…VLVV, and LLCI…IMMV.

The protein belongs to the chloride channel (TC 2.A.49) family.

The protein localises to the cell membrane. The polypeptide is Putative ion-transport protein YfeO (Escherichia fergusonii (strain ATCC 35469 / DSM 13698 / CCUG 18766 / IAM 14443 / JCM 21226 / LMG 7866 / NBRC 102419 / NCTC 12128 / CDC 0568-73)).